Reading from the N-terminus, the 377-residue chain is Succinyl-diaminopimelate desuccinylase (377 aa).

Position 68 (His-68) interacts with Zn(2+). Residue Asp-70 is part of the active site. Asp-101 contributes to the Zn(2+) binding site. Glu-135 serves as the catalytic Proton acceptor. Residues Glu-136, Glu-164, and His-350 each contribute to the Zn(2+) site.

The protein belongs to the peptidase M20A family. DapE subfamily. In terms of assembly, homodimer. Requires Zn(2+) as cofactor. The cofactor is Co(2+).

The catalysed reaction is N-succinyl-(2S,6S)-2,6-diaminopimelate + H2O = (2S,6S)-2,6-diaminopimelate + succinate. Its pathway is amino-acid biosynthesis; L-lysine biosynthesis via DAP pathway; LL-2,6-diaminopimelate from (S)-tetrahydrodipicolinate (succinylase route): step 3/3. In terms of biological role, catalyzes the hydrolysis of N-succinyl-L,L-diaminopimelic acid (SDAP), forming succinate and LL-2,6-diaminopimelate (DAP), an intermediate involved in the bacterial biosynthesis of lysine and meso-diaminopimelic acid, an essential component of bacterial cell walls. This is Succinyl-diaminopimelate desuccinylase from Psychromonas ingrahamii (strain DSM 17664 / CCUG 51855 / 37).